The chain runs to 332 residues: L-lactate dehydrogenase A chain (332 aa).

Residues 29 to 57 (GMVG…MEDK) and arginine 99 contribute to the NAD(+) site. Arginine 106, asparagine 138, and arginine 169 together coordinate substrate. Asparagine 138 serves as a coordination point for NAD(+). Catalysis depends on histidine 193, which acts as the Proton acceptor. Position 248 (threonine 248) interacts with substrate.

The protein belongs to the LDH/MDH superfamily. LDH family. Homotetramer.

Its subcellular location is the cytoplasm. The enzyme catalyses (S)-lactate + NAD(+) = pyruvate + NADH + H(+). Its pathway is fermentation; pyruvate fermentation to lactate; (S)-lactate from pyruvate: step 1/1. In terms of biological role, interconverts simultaneously and stereospecifically pyruvate and lactate with concomitant interconversion of NADH and NAD(+). The chain is L-lactate dehydrogenase A chain (ldha) from Eleginops maclovinus (Patagonian blennie).